The chain runs to 250 residues: 2-C-methyl-D-erythritol 4-phosphate cytidylyltransferase (250 aa).

The protein belongs to the IspD/TarI cytidylyltransferase family. IspD subfamily.

The enzyme catalyses 2-C-methyl-D-erythritol 4-phosphate + CTP + H(+) = 4-CDP-2-C-methyl-D-erythritol + diphosphate. It participates in isoprenoid biosynthesis; isopentenyl diphosphate biosynthesis via DXP pathway; isopentenyl diphosphate from 1-deoxy-D-xylulose 5-phosphate: step 2/6. Functionally, catalyzes the formation of 4-diphosphocytidyl-2-C-methyl-D-erythritol from CTP and 2-C-methyl-D-erythritol 4-phosphate (MEP). The chain is 2-C-methyl-D-erythritol 4-phosphate cytidylyltransferase from Streptomyces avermitilis (strain ATCC 31267 / DSM 46492 / JCM 5070 / NBRC 14893 / NCIMB 12804 / NRRL 8165 / MA-4680).